Consider the following 448-residue polypeptide: MREIVHIQAGQCGNQIGSKFWEVISDEHGVDPTGSYHGDSDLQLERINVYYSEASGGKYVPRCVLVDLEPGTMDSVRAGPFGQLFRPDNFVFGQSGAGNNWAKGHYTEGAELVESVLDVIRKECESCDCLQGFQMCHSLGGGTGSGMGTLLISKMREEFPDRIMNTFSVMPSPKVSDTVVEPYNATLSIHQLVENTDETFCIDNEALYDICFRTLKLTNPTYGDLNHLVSATMSGVTTCLRFPGQLNADLRKLAVNMVPFPRLHFFMPGFAPLTSRGSQQYRVLTVAELTQQMFDAKNMMAACDPRHGRYLTVAAMFRGRMSMKEVDDQMLNAQNKNSSYFVEWIPNNVKTAVCDIPPRGLKMSVTFMGNTTAIQEIFKRVSEQFTVMFRRKAFLHWYTGEGMDEMEFTEAESNMNDLVSEYQQYQEAGIGDDEEEDEEGVMGEEIDA.

The GTP site is built by glutamine 11, glutamate 69, serine 138, glycine 142, threonine 143, glycine 144, asparagine 204, and asparagine 226. Mg(2+) is bound at residue glutamate 69. The segment at 428–448 is disordered; it reads AGIGDDEEEDEEGVMGEEIDA. The span at 430-448 shows a compositional bias: acidic residues; sequence IGDDEEEDEEGVMGEEIDA.

Belongs to the tubulin family. As to quaternary structure, dimer of alpha and beta chains. A typical microtubule is a hollow water-filled tube with an outer diameter of 25 nm and an inner diameter of 15 nM. Alpha-beta heterodimers associate head-to-tail to form protofilaments running lengthwise along the microtubule wall with the beta-tubulin subunit facing the microtubule plus end conferring a structural polarity. Microtubules usually have 13 protofilaments but different protofilament numbers can be found in some organisms and specialized cells. Mg(2+) is required as a cofactor.

The protein localises to the cytoplasm. It is found in the cytoskeleton. Its function is as follows. Tubulin is the major constituent of microtubules, a cylinder consisting of laterally associated linear protofilaments composed of alpha- and beta-tubulin heterodimers. Microtubules grow by the addition of GTP-tubulin dimers to the microtubule end, where a stabilizing cap forms. Below the cap, tubulin dimers are in GDP-bound state, owing to GTPase activity of alpha-tubulin. The polypeptide is Tubulin beta-1 chain (TUB-1) (Echinococcus multilocularis (Fox tapeworm)).